Consider the following 608-residue polypeptide: DNA ligase (608 aa).

Glu-266 serves as a coordination point for ATP. Lys-268 functions as the N6-AMP-lysine intermediate in the catalytic mechanism. Positions 273, 288, 318, 358, 435, and 441 each coordinate ATP.

Belongs to the ATP-dependent DNA ligase family. Mg(2+) is required as a cofactor. The cofactor is Mn(2+).

The enzyme catalyses ATP + (deoxyribonucleotide)n-3'-hydroxyl + 5'-phospho-(deoxyribonucleotide)m = (deoxyribonucleotide)n+m + AMP + diphosphate.. It catalyses the reaction ADP + (deoxyribonucleotide)n-3'-hydroxyl + 5'-phospho-(deoxyribonucleotide)m = (deoxyribonucleotide)n+m + AMP + phosphate.. It carries out the reaction GTP + (deoxyribonucleotide)n-3'-hydroxyl + 5'-phospho-(deoxyribonucleotide)m = (deoxyribonucleotide)n+m + GMP + diphosphate.. Functionally, DNA ligase that seals nicks in double-stranded DNA during DNA replication, DNA recombination and DNA repair. Can use ATP, ADP and GTP, but not CTP, TTP or NAD(+). This Hyperthermus butylicus (strain DSM 5456 / JCM 9403 / PLM1-5) protein is DNA ligase.